The sequence spans 380 residues: Crotonobetainyl-CoA reductase (380 aa).

It belongs to the acyl-CoA dehydrogenase family. Homotetramer. The cofactor is FAD.

Its subcellular location is the cytoplasm. It carries out the reaction 4-(trimethylamino)butanoyl-CoA + oxidized [electron-transfer flavoprotein] + H(+) = crotonobetainyl-CoA + reduced [electron-transfer flavoprotein]. It functions in the pathway amine and polyamine metabolism; carnitine metabolism. Catalyzes the reduction of crotonobetainyl-CoA to gamma-butyrobetainyl-CoA. This Salmonella arizonae (strain ATCC BAA-731 / CDC346-86 / RSK2980) protein is Crotonobetainyl-CoA reductase.